Reading from the N-terminus, the 353-residue chain is MDLQTSLLSTGPNASNISDGQDNLTLPGSPPRTGSVSYINIIMPSVFGTICLLGIVGNSTVIFAVVKKSKLHWCSNVPDIFIINLSVVDLLFLLGMPFMIHQLMGNGVWHFGETMCTLITAMDANSQFTSTYILTAMTIDRYLATVHPISSTKFRKPSMATLVICLLWALSFISITPVWLYARLIPFPGGAVGCGIRLPNPDTDLYWFTLYQFFLAFALPFVVITAAYVKILQRMTSSVAPASQRSIRLRTKRVTRTAIAICLVFFVCWAPYYVLQLTQLSISRPTLTFVYLYNAAISLGYANSCLNPFVYIVLCETFRKRLVLSVKPAAQGQLRTVSNAQTADEERTESKGT.

The tract at residues 1–26 (MDLQTSLLSTGPNASNISDGQDNLTL) is disordered. Topologically, residues 1–45 (MDLQTSLLSTGPNASNISDGQDNLTLPGSPPRTGSVSYINIIMPS) are extracellular. N13, N16, and N23 each carry an N-linked (GlcNAc...) asparagine glycan. Residues 46–66 (VFGTICLLGIVGNSTVIFAVV) traverse the membrane as a helical segment. Residues 67-79 (KKSKLHWCSNVPD) are Cytoplasmic-facing. A helical membrane pass occupies residues 80 to 100 (IFIINLSVVDLLFLLGMPFMI). The Extracellular portion of the chain corresponds to 101–116 (HQLMGNGVWHFGETMC). An intrachain disulfide couples C116 to C194. The helical transmembrane segment at 117 to 139 (TLITAMDANSQFTSTYILTAMTI) threads the bilayer. The Cytoplasmic portion of the chain corresponds to 140 to 161 (DRYLATVHPISSTKFRKPSMAT). A helical transmembrane segment spans residues 162–182 (LVICLLWALSFISITPVWLYA). The Extracellular segment spans residues 183-204 (RLIPFPGGAVGCGIRLPNPDTD). A helical transmembrane segment spans residues 205–225 (LYWFTLYQFFLAFALPFVVIT). The Cytoplasmic portion of the chain corresponds to 226–256 (AAYVKILQRMTSSVAPASQRSIRLRTKRVTR). The chain crosses the membrane as a helical span at residues 257–277 (TAIAICLVFFVCWAPYYVLQL). The Extracellular portion of the chain corresponds to 278 to 294 (TQLSISRPTLTFVYLYN). A helical transmembrane segment spans residues 295–315 (AAISLGYANSCLNPFVYIVLC). The Cytoplasmic portion of the chain corresponds to 316 to 353 (ETFRKRLVLSVKPAAQGQLRTVSNAQTADEERTESKGT).

The protein belongs to the G-protein coupled receptor 1 family. In terms of assembly, interacts with NCDN. As to expression, high level in the brain, moderate amounts in the eye and skeletal muscle, and small amounts in tongue and pituitary.

It is found in the cell membrane. In terms of biological role, receptor for melanin-concentrating hormone, coupled to G proteins that inhibit adenylyl cyclase. The protein is Melanin-concentrating hormone receptor 1 of Rattus norvegicus (Rat).